Consider the following 437-residue polypeptide: GTPase Obg (437 aa).

In terms of domain architecture, Obg spans 2–161 (SDFIDRALIT…RELQLELKVI (160 aa)). The 174-residue stretch at 162 to 335 (ADVGLVGFPN…LQRRIVDILR (174 aa)) folds into the OBG-type G domain. Residues 168 to 175 (GFPNAGKS), 193 to 197 (FTTLS), 214 to 217 (DIPG), 284 to 287 (NKTD), and 316 to 318 (SAA) contribute to the GTP site. Ser-175 and Thr-195 together coordinate Mg(2+). The region spanning 355 to 433 (FSNIDPNDFW…IEKAELLWQD (79 aa)) is the OCT domain.

It belongs to the TRAFAC class OBG-HflX-like GTPase superfamily. OBG GTPase family. As to quaternary structure, monomer. Mg(2+) is required as a cofactor.

It is found in the cytoplasm. Functionally, an essential GTPase which binds GTP, GDP and possibly (p)ppGpp with moderate affinity, with high nucleotide exchange rates and a fairly low GTP hydrolysis rate. Plays a role in control of the cell cycle, stress response, ribosome biogenesis and in those bacteria that undergo differentiation, in morphogenesis control. This Herpetosiphon aurantiacus (strain ATCC 23779 / DSM 785 / 114-95) protein is GTPase Obg.